The sequence spans 447 residues: MGLSFFSKHLPIQEGQPWASKTPADIISTVEFNHTGELLATGDKGGRVVIFQREPESKNAPHSQGEYDVYSTFQSHEPEFDYLKSLEIEEKINKIKWLPQQNAAHSLLSTNDKTIKLWKITERDKRPEGYNLKDEEGKLKDLSTVTSLQVPVLKPMDLMVEVSPRRIFANGHTYHINSISVNSDCETYMSADDLRINLWHLAITDRSFNIVDIKPANMEDLTEVITASEFHPHHCNLFVYSSSKGSLRLCDMRAAALCDKHSKLFEEPEDPSNRSFFSEIISSVSDVKFSHSGRYMLTRDYLTVKVWDLNMEARPIETYQVHDYLRSKLCSLYENDCIFDKFECAWNGSDSVIMTGAYNNFFRMFDRNTKRDVTLEASRESSKPRAVLKPRRVCVGGKRRRDDISVDSLDFTKKILHTAWHPAENIIAIAATNNLYIFQDKVNSDMH.

7 WD repeats span residues 22 to 61 (TPAD…KNAP), 87 to 128 (EIEE…KRPE), 171 to 209 (GHTY…RSFN), 220 to 260 (DLTE…LCDK), 279 to 317 (EIIS…RPIE), 334 to 375 (ENDC…DVTL), and 410 to 446 (DFTK…NSDM).

It belongs to the phosphatase 2A regulatory subunit B family. In terms of assembly, PP2A consists of a common heterodimeric core enzyme, composed of a 36 kDa catalytic subunit (subunit C) and a 65 kDa constant regulatory subunit (PR65 or subunit A), that associates with a variety of regulatory subunits. Proteins that associate with the core dimer include three families of regulatory subunits B (the R2/B/PR55/B55, R3/B''/PR72/PR130/PR59 and R5/B'/B56 families), the 48 kDa variable regulatory subunit, viral proteins, and cell signaling molecules. Interacts with IER5.

Functionally, the B regulatory subunit might modulate substrate selectivity and catalytic activity, and might also direct the localization of the catalytic enzyme to a particular subcellular compartment. The sequence is that of Serine/threonine-protein phosphatase 2A 55 kDa regulatory subunit B gamma isoform (PPP2R2C) from Macaca fascicularis (Crab-eating macaque).